We begin with the raw amino-acid sequence, 241 residues long: Thiamine import ATP-binding protein ThiQ (241 aa).

One can recognise an ABC transporter domain in the interval 2-239; it reads IQLDKLNHCY…PKDEVLIQYL (238 aa). 41–48 contacts ATP; the sequence is GPSGAGKS.

This sequence belongs to the ABC transporter superfamily. Thiamine importer (TC 3.A.1.19.1) family. As to quaternary structure, the complex is composed of two ATP-binding proteins (ThiQ), two transmembrane proteins (ThiP) and a solute-binding protein (ThiB).

Its subcellular location is the cell inner membrane. It carries out the reaction thiamine(out) + ATP + H2O = thiamine(in) + ADP + phosphate + H(+). In terms of biological role, part of the ABC transporter complex ThiBPQ involved in thiamine import. Responsible for energy coupling to the transport system. The protein is Thiamine import ATP-binding protein ThiQ of Photobacterium profundum (strain SS9).